Reading from the N-terminus, the 799-residue chain is High affinity nerve growth factor receptor (799 aa).

The first 32 residues, 1–32 (MLRGQRHGQLGWHRPAAGLGGLVTSLMLACAC), serve as a signal peptide directing secretion. The Extracellular segment spans residues 33-418 (AASCRETCCP…DPVEKKDETP (386 aa)). Cystine bridges form between cysteine 36–cysteine 41 and cysteine 40–cysteine 50. N-linked (GlcNAc...) asparagine glycosylation is present at asparagine 67. LRR repeat units lie at residues 90 to 113 (LGEL…AFHF) and 116 to 137 (RLSH…TVQG). Asparagine 121, asparagine 190, asparagine 204, asparagine 255, asparagine 264, asparagine 320, asparagine 325, asparagine 341, asparagine 361, and asparagine 404 each carry an N-linked (GlcNAc...) asparagine glycan. The LRRCT domain occupies 148-219 (NPLHCSCALL…GDDVFLQCQV (72 aa)). A disulfide bond links cysteine 154 and cysteine 193. Ig-like C2-type domains lie at 196 to 285 (PSVK…VSVS) and 295 to 368 (AVEQ…LAAN). 2 cysteine pairs are disulfide-bonded: cysteine 217–cysteine 267 and cysteine 302–cysteine 348. The chain crosses the membrane as a helical span at residues 419–442 (FGVSVAVGLAVSAALFLSALLLVL). Over 443 to 799 (NKCGQRSKFG…APPSYLDVLG (357 aa)) the chain is Cytoplasmic. The interval 472–493 (MTLGGSSLSPTEGKGSGLQGHI) is interaction with SQSTM1. The residue at position 499 (tyrosine 499) is a Phosphotyrosine; by autocatalysis. Residues 513–784 (IILKWELGEG…LSMKDVHARL (272 aa)) enclose the Protein kinase domain. Residues 519–527 (LGEGAFGKV) and lysine 547 each bind ATP. Residue aspartate 653 is the Proton acceptor of the active site. 4 positions are modified to phosphotyrosine; by autocatalysis: tyrosine 679, tyrosine 683, tyrosine 684, and tyrosine 794.

This sequence belongs to the protein kinase superfamily. Tyr protein kinase family. Insulin receptor subfamily. Exists in a dynamic equilibrium between monomeric (low affinity) and dimeric (high affinity) structures. Homodimerization is induced by binding of a NGF dimer. Found in a complex, at least composed of KIDINS220, MAGI2, NTRK1 and RAPGEF2; the complex is mainly formed at late endosomes in a nerve growth factor (NGF)-dependent manner. Interacts with RAPGEF2; the interaction is strengthened after NGF stimulation. Interacts with SQSTM1; bridges NTRK1 to NGFR. Forms a ternary complex with NGFR and KIDINS220; this complex is affected by the expression levels of KIDINS220 and an increase in KIDINS220 expression leads to a decreased association of NGFR and NTRK1. Interacts (phosphorylated upon activation by NGF) with SHC1; mediates SHC1 phosphorylation and activation. Interacts (phosphorylated upon activation by NGF) with PLCG1; mediates PLCG1 phosphorylation and activation. Interacts (phosphorylated) with SH2B1 and SH2B2. Interacts with GRB2. Interacts with PIK3R1. Interacts with FRS2. Interacts with SORT1; may regulate NTRK1 anterograde axonal transport. Interacts with SH2D1A; regulates NTRK1. Interacts with NRADD. Interacts with RAB7A. Interacts with PTPRS. Interacts with USP36; USP36 does not deubiquitinate NTRK1. Interacts with GGA3. Interacts with TSPAN1; this interaction promotes NTRK1 stability. Ligand-mediated autophosphorylation. Interaction with SQSTM1 is phosphotyrosine-dependent. Autophosphorylation at Tyr-499 mediates interaction and phosphorylation of SHC1. In terms of processing, N-glycosylated. Post-translationally, ubiquitinated. Undergoes polyubiquitination upon activation; regulated by NGFR. Ubiquitination by NEDD4L leads to degradation. Ubiquitination regulates the internalization of the receptor. Isoform Trka-II is primarily expressed in neuronal cells; isoform Trka-I is found in non-neuronal tissues.

The protein localises to the cell membrane. It is found in the early endosome membrane. Its subcellular location is the late endosome membrane. It localises to the recycling endosome membrane. It catalyses the reaction L-tyrosyl-[protein] + ATP = O-phospho-L-tyrosyl-[protein] + ADP + H(+). Its activity is regulated as follows. The pro-survival signaling effect of NTRK1 in neurons requires its endocytosis into signaling early endosomes and its retrograde axonal transport. This is regulated by different proteins including CFL1, RAC1 and SORT1. NTF3 is unable to induce this signaling probably due to the lability of the NTF3-NTRK1 complex in endosomes. SH2D1A inhibits the autophosphorylation of the receptor, and alters the recruitment and activation of downstream effectors and signaling cascades. Regulated by NGFR. Its function is as follows. Receptor tyrosine kinase involved in the development and the maturation of the central and peripheral nervous systems through regulation of proliferation, differentiation and survival of sympathetic and nervous neurons. High affinity receptor for NGF which is its primary ligand. Can also bind and be activated by NTF3/neurotrophin-3. However, NTF3 only supports axonal extension through NTRK1 but has no effect on neuron survival. Upon dimeric NGF ligand-binding, undergoes homodimerization, autophosphorylation and activation. Recruits, phosphorylates and/or activates several downstream effectors including SHC1, FRS2, SH2B1, SH2B2 and PLCG1 that regulate distinct overlapping signaling cascades driving cell survival and differentiation. Through SHC1 and FRS2 activates a GRB2-Ras-MAPK cascade that regulates cell differentiation and survival. Through PLCG1 controls NF-Kappa-B activation and the transcription of genes involved in cell survival. Through SHC1 and SH2B1 controls a Ras-PI3 kinase-AKT1 signaling cascade that is also regulating survival. In absence of ligand and activation, may promote cell death, making the survival of neurons dependent on trophic factors. The protein is High affinity nerve growth factor receptor (Ntrk1) of Rattus norvegicus (Rat).